The primary structure comprises 443 residues: MSKTYHFIGIKGSGMSALALMLHQMGHNVQGSDVDKYYFTQRGLEQAGVTILPFSPNNISEDLEIIAGNAFRPDNNEELAYVIEKGYHFKRYHEFLGDFMRQFTSLGVAGAHGKTSTTGLLAHVLKNITDTSFLIGDGTGRGSANANYFVFEADEYERHFMPYHPEYSIITNIDFDHPDYFTGLEDVFNAFNDYAKQVQKGLFIYGEDSKLHEITSKAPIYYYGFEDSNDFIAKDITRTVNGSDFKVFYNQEEIGQFHVPAYGKHNILNATAVIANLYIMGIDMALVAEHLKTFSGVKRRFTEKIIDDTVIIDDFAHHPTEIIATLDAARQKYPSKEIVAIFQPHTFTRTIALLDDFAHALSQADSVYLAQIYGSAREVDNGEVKVEDLAAKIVKHSDLVTVENVSPLLNHDNAVYVFMGAGDIQLYERSFEELLANLTKNTQ.

110–116 (GAHGKTS) provides a ligand contact to ATP.

It belongs to the MurCDEF family.

The protein resides in the cytoplasm. The catalysed reaction is UDP-N-acetyl-alpha-D-muramate + L-alanine + ATP = UDP-N-acetyl-alpha-D-muramoyl-L-alanine + ADP + phosphate + H(+). It functions in the pathway cell wall biogenesis; peptidoglycan biosynthesis. In terms of biological role, cell wall formation. The chain is UDP-N-acetylmuramate--L-alanine ligase from Streptococcus agalactiae serotype III (strain NEM316).